The following is a 780-amino-acid chain: Striatin (780 aa).

Residues 53-120 (LHFLQHEWAR…QERAKYHKLK (68 aa)) are a coiled coil. Residues 55–63 (FLQHEWARF) are caveolin-binding. The disordered stretch occupies residues 124–150 (ELNQGDMKPPSYDSDEGNETEVQPQQN). Phosphoserine is present on serine 137. Residues 149-166 (QNSQLMWKQGRQLLRQYL) are calmodulin-binding. Threonine 225 bears the Phosphothreonine mark. A phosphoserine mark is found at serine 227, serine 229, serine 245, and serine 259. 2 disordered regions span residues 289-310 (DFLV…GTDW) and 365-387 (DELP…RLPE). Positions 299–310 (NESRSAGDGTDW) are enriched in basic and acidic residues. WD repeat units follow at residues 461 to 500 (SHFD…PAKK), 514 to 553 (AHKG…IDPY), 567 to 606 (GHTD…PALS), 662 to 701 (NSSC…LIHS), 704 to 743 (AHLE…CIQE), and 750 to 780 (KFEE…KVFV).

The protein belongs to the WD repeat striatin family. In terms of assembly, part of the core of STRIPAK complexes composed of PP2A catalytic and scaffolding subunits, the striatins (PP2A regulatory subunits), the striatin-associated proteins MOB4, STRIP1 and STRIP2, PDCD10 and members of the STE20 kinases, such as STK24 and STK26. Interacts with CTTNBP2; this interaction may regulate dendritic spine distribution of STRN. Activation of glutamate receptors weakens the interaction with CTTNBP2. In terms of tissue distribution, preferentially expressed in brain.

The protein resides in the cytoplasm. It localises to the membrane. It is found in the cell projection. Its subcellular location is the dendritic spine. Functionally, calmodulin-binding scaffolding protein which is the center of the striatin-interacting phosphatase and kinase (STRIPAK) complexes. STRIPAK complexes have critical roles in protein (de)phosphorylation and are regulators of multiple signaling pathways including Hippo, MAPK, nuclear receptor and cytoskeleton remodeling. Different types of STRIPAK complexes are involved in a variety of biological processes such as cell growth, differentiation, apoptosis, metabolism and immune regulation. The sequence is that of Striatin (STRN) from Homo sapiens (Human).